The sequence spans 429 residues: MGLIAFLILIGVLVWVHEFGHFLMAKLFRVKVEIFSIGFGPPIFRRQWGETVYQIAALPLGGYVKLYGEEENVHDPRAFSTKKPWQKILIALGGPLFNFLFTILVFALVYTAGVEVPKYLKEPVVVGYVQRDSIAQKIGIKPGDKIIKINGYEVRTWEDLRDALIRLSLDGVKETTLFLERNGEVLHLTIKVPNVQKGEELGIAPLVKPVVGGVKKGSPADQVGIKPGDLILEVNGKKINTWYELVEEVRKSQGKAIKLKILRNGKMIEKELIPAKDPKTGTYFIGLFPKTETVVEKKPFGEALASAVNRTWELTVLTLKTIAGLITGKVSFQTLGGPIAIAQIAGQAAQSGFIPYLVMMAFISLQLGIFNLIPLPILDGGLILLFAIEWLRGRPLPEKFKEYWQRVGLAIIITLTIFVFINDILRLLR.

A Zn(2+)-binding site is contributed by His-17. Glu-18 is a catalytic residue. His-21 is a binding site for Zn(2+). A helical transmembrane segment spans residues 88–110 (ILIALGGPLFNFLFTILVFALVY). Residues 189-265 (TIKVPNVQKG…AIKLKILRNG (77 aa)) form the PDZ domain. Transmembrane regions (helical) follow at residues 369–391 (IFNL…IEWL) and 406–428 (RVGL…LRLL).

It belongs to the peptidase M50B family. The cofactor is Zn(2+).

It localises to the cell inner membrane. The chain is Putative zinc metalloprotease aq_1964 from Aquifex aeolicus (strain VF5).